Here is a 394-residue protein sequence, read N- to C-terminus: Na(+)/H(+) antiporter NhaA (394 aa).

11 helical membrane passes run 14–34 (AGGLILIIAAAIALLMANSAL), 59–79 (LLLWINDGLMAVFFLMVGLEV), 95–115 (VFPAIAALGGMLAPALIYLLF), 125–145 (GWAIPAATDIAFALGVMALLG), 154–174 (VFLLALAIIDDLGVIIIIALF), 179–199 (VSLQSLGIAAAAIALLAYMNW), 213–233 (LVLWVCILKSGVHATLAGVIV), 254–274 (GLHPWVAYLILPLFAFANAGV), 292–312 (IATGLFIGKPLGIFTFSWLAV), 328–348 (IFAVSVLCGIGFTMSIFIASL), and 363–383 (LGILLGSTTAAVVGYSLLRLV).

Belongs to the NhaA Na(+)/H(+) (TC 2.A.33) antiporter family.

It localises to the cell inner membrane. The enzyme catalyses Na(+)(in) + 2 H(+)(out) = Na(+)(out) + 2 H(+)(in). Functionally, na(+)/H(+) antiporter that extrudes sodium in exchange for external protons. The sequence is that of Na(+)/H(+) antiporter NhaA from Yersinia pseudotuberculosis serotype IB (strain PB1/+).